The sequence spans 162 residues: G/U mismatch-specific DNA glycosylase (162 aa).

This sequence belongs to the uracil-DNA glycosylase (UDG) superfamily. TDG/mug family. As to quaternary structure, binds DNA as a monomer.

The protein resides in the cytoplasm. The enzyme catalyses Specifically hydrolyzes mismatched double-stranded DNA and polynucleotides, releasing free uracil.. Its function is as follows. Excises ethenocytosine and uracil, which can arise by alkylation or deamination of cytosine, respectively, from the corresponding mispairs with guanine in ds-DNA. It is capable of hydrolyzing the carbon-nitrogen bond between the sugar-phosphate backbone of the DNA and the mispaired base. The complementary strand guanine functions in substrate recognition. Required for DNA damage lesion repair in stationary-phase cells. In Serratia proteamaculans (strain 568), this protein is G/U mismatch-specific DNA glycosylase.